The following is a 504-amino-acid chain: DnaJ homolog subfamily C member 3 (504 aa).

A signal peptide spans 1–31 (MVAPGSVTSRLGSVFPFLLVLVDLQYEGAEC). 9 TPR repeats span residues 37-70 (VEKH…DPDN), 72-104 (IAYY…KMDF), 105-138 (TAAR…NPSE), 154-187 (MQRL…CVWD), 189-221 (ELRE…KNDN), 222-255 (TEAF…DQDH), 268-301 (LNKL…EPSI), 306-339 (VRSK…EPDN), and 340-373 (VNAL…NEND). Cysteines 248 and 258 form a disulfide. Serine 274 bears the Phosphoserine; by FAM20C mark. A disulfide bridge connects residues cysteine 313 and cysteine 329. The tract at residues 375–393 (QIREGLEKAQRLLKQSQKR) is flexible linker. Residues 394 to 462 (DYYKILGVKR…EMRKKFDDGE (69 aa)) enclose the J domain. Residues 451–481 (DPEMRKKFDDGEDPLDAESQQGGGGNPFHRS) form a disordered region.

In terms of assembly, interacts with EIF2AK4/GCN2; this interaction occurs under endoplasmic reticulum (ER) stress, hypothermic and amino acid starving stress conditions and inhibits EIF2AK4/GCN2 kinase activity. Interacts with EIF2AK3. Interacts with EIF2AK2. Forms a trimeric complex with DNAJB1 and HSPA8. Interacts with THAP12. As to expression, widely expressed with high level in the pancreas and testis. Also expressed in cell lines with different levels.

It is found in the endoplasmic reticulum. Functionally, involved in the unfolded protein response (UPR) during endoplasmic reticulum (ER) stress. Acts as a negative regulator of the EIF2AK4/GCN2 kinase activity by preventing the phosphorylation of eIF-2-alpha at 'Ser-52' and hence attenuating general protein synthesis under ER stress, hypothermic and amino acid starving stress conditions. Co-chaperone of HSPA8/HSC70, it stimulates its ATPase activity. May inhibit both the autophosphorylation of EIF2AK2/PKR and the ability of EIF2AK2 to catalyze phosphorylation of the EIF2A. May inhibit EIF2AK3/PERK activity. The sequence is that of DnaJ homolog subfamily C member 3 (DNAJC3) from Homo sapiens (Human).